Consider the following 656-residue polypeptide: UvrABC system protein C (656 aa).

The region spanning 41–120 (KSSGCYLFKD…IKTNKPYFNI (80 aa)) is the GIY-YIG domain. Residues 230–265 (DDLEVFLERKMNQYSNDLEFENAAKIRDQISGLKLL) form the UVR domain.

Belongs to the UvrC family. In terms of assembly, interacts with UvrB in an incision complex.

It localises to the cytoplasm. In terms of biological role, the UvrABC repair system catalyzes the recognition and processing of DNA lesions. UvrC both incises the 5' and 3' sides of the lesion. The N-terminal half is responsible for the 3' incision and the C-terminal half is responsible for the 5' incision. The sequence is that of UvrABC system protein C from Prochlorococcus marinus subsp. pastoris (strain CCMP1986 / NIES-2087 / MED4).